Consider the following 596-residue polypeptide: Tripeptidyl-peptidase SED2 (596 aa).

An N-terminal signal peptide occupies residues 1 to 16 (MLVLKFVCLLASVAAA). Positions 18 to 203 (PTSWSSHKVV…LEAMSEEEFS (186 aa)) are cleaved as a propeptide — removed in mature form. In terms of domain architecture, Peptidase S53 spans 210-596 (LVTTACLREL…NFQALTKVLP (387 aa)). Asn-265 carries an N-linked (GlcNAc...) asparagine glycan. Active-site charge relay system residues include Glu-286 and Asp-290. An N-linked (GlcNAc...) asparagine glycan is attached at Asn-403. Ser-501 acts as the Charge relay system in catalysis. Residues Asp-543 and Ile-544 each coordinate Ca(2+). Residue Asn-572 is glycosylated (N-linked (GlcNAc...) asparagine). Ca(2+)-binding residues include Gly-576 and Asp-578.

Ca(2+) is required as a cofactor.

The protein localises to the secreted. The protein resides in the extracellular space. The catalysed reaction is Release of an N-terminal tripeptide from a polypeptide.. Functionally, secreted tripeptidyl-peptidase which degrades proteins at acidic pHs and is involved in virulence. The sequence is that of Tripeptidyl-peptidase SED2 (SED2) from Arthroderma otae (strain ATCC MYA-4605 / CBS 113480) (Microsporum canis).